Here is a 954-residue protein sequence, read N- to C-terminus: MTQKLQMADRFDASAVEQALYNHWEQKGYFKPSYDAGRPSYSIAIPPPNVTGSLHMGHAFQQTLMDTLIRYHRMQGDNTLWQAGTDHAGIATQMVVERKIAAEENKTRHDYGREAFIEKIWDWKAYSGGTISQQMRRLGNSIDWERERFTMDEGLSEAVKEVFVRLHEEGLIYRGKRLVNWDPKLHTAISDLEVENKESKGSLWHFRYPLAKGAKTAEGLDYLVVATTRPETVLGDTAVAVHPEDERYQSLIGKTVVLPLANREIPIVADEYVDREFGTGVVKITPAHDFNDYEVGKRHNLPMVNVMTFNADIREEAEIIGTDGQPLTTYEAEIPQDYRGLERFAARKKVVADFDSLGLLEKIQPHDLKVPYGDRGGVPIEPMLTDQWYVSVKPLAETAIKAVEEGEIQFVPKQYENLYYSWMRDIQDWCISRQLWWGHRIPAWYDEQGNVYVGRSEEEVRSKNGLNSSVALRQDEDVLDTWFSSALWTFSTLGWPQQTKELAMFHPTNVLITGFDIIFFWVARMIMMTMHFIKDENGKPQVPFKTVYVTGLIRDEQGQKMSKSKGNVIDPLDMIDGIDLESLLAKRTGNMMQPQLAEKIAKATKKEFPEGIQPHGTDALRFTLSALASTGRDINWDMKRLEGYRNFCNKLWNASRFVLTNDKLDLSTGERELSLADKWIQAEFNKTVQNFRNALDQYRFDLAATELYEFTWNQFCDWYLELTKPVFANGTDAQIRAASFTLVNVLEKLLRLAHPLIPFITEEIWQKVKDFAGVEGETIMTQPFPAFDEALVNDEAVAQISWIKEVITAVRNIRAESNIAPSKGLDLLLRNLPDTEQKTLENNRTLMQIMAKLDSVKVLAQDEEAPLSVAKLVGSAELLVPMAGFINKDTELARLNKEIEKLIGEVKRIEGKLGNEAFVAKAPEAVIAKEREKMQDYQEGLEKLRAQYLSIENL.

The short motif at P48–H58 is the 'HIGH' region element. The short motif at K560–S564 is the 'KMSKS' region element. Residue K563 coordinates ATP. Residues I886–L954 are a coiled coil.

It belongs to the class-I aminoacyl-tRNA synthetase family. ValS type 1 subfamily. As to quaternary structure, monomer.

The protein resides in the cytoplasm. The catalysed reaction is tRNA(Val) + L-valine + ATP = L-valyl-tRNA(Val) + AMP + diphosphate. Catalyzes the attachment of valine to tRNA(Val). As ValRS can inadvertently accommodate and process structurally similar amino acids such as threonine, to avoid such errors, it has a 'posttransfer' editing activity that hydrolyzes mischarged Thr-tRNA(Val) in a tRNA-dependent manner. In Mannheimia succiniciproducens (strain KCTC 0769BP / MBEL55E), this protein is Valine--tRNA ligase.